Reading from the N-terminus, the 1438-residue chain is DNA polymerase III PolC-type (1438 aa).

Residues Tyr422–Phe578 form the Exonuclease domain.

This sequence belongs to the DNA polymerase type-C family. PolC subfamily.

It is found in the cytoplasm. It catalyses the reaction DNA(n) + a 2'-deoxyribonucleoside 5'-triphosphate = DNA(n+1) + diphosphate. In terms of biological role, required for replicative DNA synthesis. This DNA polymerase also exhibits 3' to 5' exonuclease activity. The polypeptide is DNA polymerase III PolC-type (Staphylococcus aureus (strain MRSA252)).